A 364-amino-acid polypeptide reads, in one-letter code: Aminomethyltransferase (364 aa).

Belongs to the GcvT family. As to quaternary structure, the glycine cleavage system is composed of four proteins: P, T, L and H.

The enzyme catalyses N(6)-[(R)-S(8)-aminomethyldihydrolipoyl]-L-lysyl-[protein] + (6S)-5,6,7,8-tetrahydrofolate = N(6)-[(R)-dihydrolipoyl]-L-lysyl-[protein] + (6R)-5,10-methylene-5,6,7,8-tetrahydrofolate + NH4(+). In terms of biological role, the glycine cleavage system catalyzes the degradation of glycine. This is Aminomethyltransferase from Shigella dysenteriae serotype 1 (strain Sd197).